A 531-amino-acid polypeptide reads, in one-letter code: Ultra-long-chain fatty acid omega-hydroxylase (531 aa).

The Lumenal portion of the chain corresponds to 1–22; the sequence is MLPITDRLLHLLGLEKTAFRIY. A helical transmembrane segment spans residues 23–43; the sequence is AVSTLLLFLLFFLFRLLLRFL. Topologically, residues 44-531 are cytoplasmic; that stretch reads RLCRSFYITC…LKVEPLPPRA (488 aa). E335 and C475 together coordinate heme.

The protein belongs to the cytochrome P450 family. Heme serves as cofactor.

It localises to the endoplasmic reticulum membrane. It is found in the microsome membrane. It carries out the reaction triacontanoate + reduced [NADPH--hemoprotein reductase] + O2 = omega-hydroxy-triacontanoate + oxidized [NADPH--hemoprotein reductase] + H2O + H(+). It catalyses the reaction an omega-methyl-ultra-long-chain fatty acid + reduced [NADPH--hemoprotein reductase] + O2 = an omega-hydroxy-ultra-long-chain fatty acid + oxidized [NADPH--hemoprotein reductase] + H2O + H(+). In terms of biological role, a cytochrome P450 monooxygenase involved in epidermal ceramide biosynthesis. Hydroxylates the terminal carbon (omega-hydroxylation) of ultra-long-chain fatty acyls (C28-C36) prior to ceramide synthesis. Contributes to the synthesis of three classes of omega-hydroxy-ultra-long chain fatty acylceramides having sphingosine, 6-hydroxysphingosine and phytosphingosine bases, all major lipid components that underlie the permeability barrier of the stratum corneum. Mechanistically, uses molecular oxygen inserting one oxygen atom into a substrate, and reducing the second into a water molecule, with two electrons provided by NADPH via cytochrome P450 reductase (CPR; NADPH-ferrihemoprotein reductase). This chain is Ultra-long-chain fatty acid omega-hydroxylase, found in Homo sapiens (Human).